The primary structure comprises 944 residues: E3 ubiquitin-protein ligase JMJ24 (944 aa).

2 disordered regions span residues 20 to 40 and 77 to 103; these read QTRSANGIGNGNGESIPGIPD and ANSAFRANQKKAKRRSSLGETDTYSEG. A WRC domain is found at 38-83; it reads IPDDLRCKRSDGKQWRCTAMSMADKTVCEKHYIQAKKRAANSAFRA. Residues 73–80 carry the Nuclear localization signal 1 motif; that stretch reads KKRAANSA. The PHD-type; atypical zinc finger occupies 217–269; that stretch reads GEICHQCQRKDRERIISCLKCNQRAFCHNCLSARYSEISLEEVEKVCPACRGL. Positions 220, 223, 234, 237, 243, 246, 263, and 266 each coordinate Zn(2+). The Nuclear localization signal 2 signature appears at 323-330; that stretch reads EKRLREVE. The 253-residue stretch at 621-873 folds into the JmjC domain; sequence PRLGLLNVAA…ESARLAEEIR (253 aa). Residues 685-703 show a composition bias toward basic and acidic residues; that stretch reads ERVRKTKPVPEEPDQKMSE. A disordered region spans residues 685-715; the sequence is ERVRKTKPVPEEPDQKMSENESLLSPEQKLR.

The protein belongs to the JARID1 histone demethylase family. Homodimer. Interacts with RDR2. Binds to CMT3. Associates with the E2 ubiquitin-conjugating enzyme UBC10. In terms of processing, self-ubiquitinates. As to expression, expressed in inflorescences, flowers, roots, siliques, leaves and stems, especially in the vasculature (mainly phloem), with highest levels in floral organs.

Its subcellular location is the nucleus. It carries out the reaction S-ubiquitinyl-[E2 ubiquitin-conjugating enzyme]-L-cysteine + [acceptor protein]-L-lysine = [E2 ubiquitin-conjugating enzyme]-L-cysteine + N(6)-ubiquitinyl-[acceptor protein]-L-lysine.. Its function is as follows. Binds histone H3 but seems to have lost demethylase activity probably due to its inability to bind iron Fe(2+). Possesses E3 ubiquitin ligase activity and targets directly CMT3 for proteasomal degradation to initiate destabilization of the heterochromatic state (e.g. CHG cytosine methylation and H3K9me2) of endogenous silenced loci. Required for the removal of repressive H3K9me2 histone marks to facilitate the transcription of AtSN1, AtMu1c, solo LTR and SDC, thus counteracting their transcriptional silencing. Mainly required to promote the basal level transcription of silenced loci such as TE and repeats targeted by RNA-dependent DNA methylation (RdDM) for silencing, a specialized branch of the RNA interference (RNAi) pathway. Also cooperates with RNAi pathways for gene silencing both by contributing to the production of 24-nt siRNA to initiate RdDM and by recruiting RDR2 to enable local transcripts to make dsRNA. Antagonizes histone H3K9 demethylase IBM1/JMJ25 function. This is E3 ubiquitin-protein ligase JMJ24 from Arabidopsis thaliana (Mouse-ear cress).